The following is a 299-amino-acid chain: Biotin synthase (299 aa).

Residues 22-252 form the Radical SAM core domain; it reads TSNLKLDLCS…NVTIKIAAGR (231 aa). Positions 40, 44, and 47 each coordinate [4Fe-4S] cluster. Positions 116, 176, and 247 each coordinate [2Fe-2S] cluster.

The protein belongs to the radical SAM superfamily. Biotin synthase family. In terms of assembly, homodimer. The cofactor is [4Fe-4S] cluster. Requires [2Fe-2S] cluster as cofactor.

The enzyme catalyses (4R,5S)-dethiobiotin + (sulfur carrier)-SH + 2 reduced [2Fe-2S]-[ferredoxin] + 2 S-adenosyl-L-methionine = (sulfur carrier)-H + biotin + 2 5'-deoxyadenosine + 2 L-methionine + 2 oxidized [2Fe-2S]-[ferredoxin]. The protein operates within cofactor biosynthesis; biotin biosynthesis; biotin from 7,8-diaminononanoate: step 2/2. In terms of biological role, catalyzes the conversion of dethiobiotin (DTB) to biotin by the insertion of a sulfur atom into dethiobiotin via a radical-based mechanism. The sequence is that of Biotin synthase from Thermotoga petrophila (strain ATCC BAA-488 / DSM 13995 / JCM 10881 / RKU-1).